A 182-amino-acid polypeptide reads, in one-letter code: Ribosome-recycling factor (182 aa).

It belongs to the RRF family.

It localises to the cytoplasm. Responsible for the release of ribosomes from messenger RNA at the termination of protein biosynthesis. May increase the efficiency of translation by recycling ribosomes from one round of translation to another. The chain is Ribosome-recycling factor from Synechocystis sp. (strain ATCC 27184 / PCC 6803 / Kazusa).